The primary structure comprises 102 residues: NADH-quinone oxidoreductase subunit K (102 aa).

3 helical membrane passes run 6–26, 30–50, and 62–82; these read LEHGLIVATILFALGFYGVMV, LLFMLMSLEIMMNAAALAFVL, and IMFILILTLAAAEACIGLAIV.

This sequence belongs to the complex I subunit 4L family. In terms of assembly, NDH-1 is composed of 14 different subunits. Subunits NuoA, H, J, K, L, M, N constitute the membrane sector of the complex.

It is found in the cell inner membrane. The enzyme catalyses a quinone + NADH + 5 H(+)(in) = a quinol + NAD(+) + 4 H(+)(out). NDH-1 shuttles electrons from NADH, via FMN and iron-sulfur (Fe-S) centers, to quinones in the respiratory chain. The immediate electron acceptor for the enzyme in this species is believed to be ubiquinone. Couples the redox reaction to proton translocation (for every two electrons transferred, four hydrogen ions are translocated across the cytoplasmic membrane), and thus conserves the redox energy in a proton gradient. The sequence is that of NADH-quinone oxidoreductase subunit K from Acinetobacter baylyi (strain ATCC 33305 / BD413 / ADP1).